The following is a 444-amino-acid chain: Signal recognition particle 54 kDa protein (444 aa).

GTP-binding positions include 104–111, 184–188, and 242–245; these read GLQGSGKT, DTAGR, and TKLD.

The protein belongs to the GTP-binding SRP family. SRP54 subfamily. As to quaternary structure, part of the signal recognition particle protein translocation system, which is composed of SRP and FtsY. Archaeal SRP consists of a 7S RNA molecule of 300 nucleotides and two protein subunits: SRP54 and SRP19.

It is found in the cytoplasm. The enzyme catalyses GTP + H2O = GDP + phosphate + H(+). Functionally, involved in targeting and insertion of nascent membrane proteins into the cytoplasmic membrane. Binds to the hydrophobic signal sequence of the ribosome-nascent chain (RNC) as it emerges from the ribosomes. The SRP-RNC complex is then targeted to the cytoplasmic membrane where it interacts with the SRP receptor FtsY. This is Signal recognition particle 54 kDa protein from Methanothrix thermoacetophila (strain DSM 6194 / JCM 14653 / NBRC 101360 / PT) (Methanosaeta thermophila).